The sequence spans 123 residues: MSINKQQILDAVSEMSVLEISELVSMMEKKFGVSSINNNNINVNKVDESVEEKSEFDVLLLEIGKNKISVIKSVRSALSLGLKESKDLIESELPITLKTGLNKKDAESLKKEIETSGARIELK.

This sequence belongs to the bacterial ribosomal protein bL12 family. Homodimer. Part of the ribosomal stalk of the 50S ribosomal subunit. Forms a multimeric L10(L12)X complex, where L10 forms an elongated spine to which 2 to 4 L12 dimers bind in a sequential fashion. Binds GTP-bound translation factors.

In terms of biological role, forms part of the ribosomal stalk which helps the ribosome interact with GTP-bound translation factors. Is thus essential for accurate translation. The protein is Large ribosomal subunit protein bL12 of Wigglesworthia glossinidia brevipalpis.